A 351-amino-acid chain; its full sequence is Homeobox-leucine zipper protein HOX23 (351 aa).

The tract at residues 34–128 (LQDHAHGGHG…SFESGNKLEP (95 aa)) is disordered. Low complexity predominate over residues 56–65 (SPFLPDLAMD). A DNA-binding region (homeobox) is located at residues 101 to 160 (GGEKKRRLSVEQVRTLERSFESGNKLEPERKAQLARALGLQPRQVAIWFQNRRARWKTKQ). The segment covering 114-128 (RTLERSFESGNKLEP) has biased composition (basic and acidic residues). Residues 159–203 (KQLEKDFDALRRQLDAARAENDALLSLNSKLHAEIVALKGGAAAA) form a leucine-zipper region. The segment at 227-263 (EASCSNRSENSSEINLDISRPAPPPPPPPANESPVNR) is disordered. Positions 228–240 (ASCSNRSENSSEI) are enriched in polar residues. The span at 247–257 (PAPPPPPPPAN) shows a compositional bias: pro residues.

This sequence belongs to the HD-ZIP homeobox family. Class I subfamily. As to expression, expressed in seedlings, roots, stems, leaf sheaths and panicles.

It localises to the nucleus. In terms of biological role, probable transcription factor. The sequence is that of Homeobox-leucine zipper protein HOX23 (HOX23) from Oryza sativa subsp. indica (Rice).